A 101-amino-acid chain; its full sequence is Small ribosomal subunit protein uS14 (101 aa).

Belongs to the universal ribosomal protein uS14 family. In terms of assembly, part of the 30S ribosomal subunit. Contacts proteins S3 and S10.

Functionally, binds 16S rRNA, required for the assembly of 30S particles and may also be responsible for determining the conformation of the 16S rRNA at the A site. The chain is Small ribosomal subunit protein uS14 from Cupriavidus necator (strain ATCC 17699 / DSM 428 / KCTC 22496 / NCIMB 10442 / H16 / Stanier 337) (Ralstonia eutropha).